Reading from the N-terminus, the 144-residue chain is Maximins 3/H11 type 2 (144 aa).

An N-terminal signal peptide occupies residues 1–18 (MHFKYIVAVSFLIASAYA). 2 consecutive propeptides follow at residues 19–43 (RSVQ…REIR) and 73–122 (RTAE…KKEK). The residue at position 143 (isoleucine 143) is an Isoleucine amide.

It belongs to the bombinin family. In terms of tissue distribution, expressed by the skin glands.

The protein localises to the secreted. Maximin-3 shows antibacterial activity against both Gram-positive and Gram-negative bacteria. It also shows antimicrobial activity against the fungus C.albicans, but not against A.flavus nor P.uticale. It has little hemolytic activity. It possess a significant cytotoxicity against tumor cell lines. It possess a significant anti-HIV activity. It shows high spermicidal activity. Its function is as follows. Maximin-H11 shows antimicrobial activity against bacteria and against the fungus C.albicans. Shows strong hemolytic activity. The polypeptide is Maximins 3/H11 type 2 (Bombina maxima (Giant fire-bellied toad)).